A 498-amino-acid chain; its full sequence is MDPLGAPSQFVDVDTLLSWGDSYEDEVDCADSTAEAFQEDASRSPFVYSRDVNGKVVLWKGDVALLNCTAIVNTSNESLTDKNPVSESIFMLAGPDLKEDLQKLKGCRTGEAKLTKGFNLAARFIIHTVGPKYKSRYRTAAESSLYSCYRNVLQLAKEQSMSSVGFCVINSAKRGYPLEDATHIALRTVRRFLEIHGENIEKVVFAVSELEEATYQKLLPLYFPRSLKEEIRSLPYLPADIGNAEGEPVVPERQIRISEKPGASEDNEEEDEDEGLGVDLSFIGSHAFARMEGDIDKQRKLILQGQLSEAALQKQHQRNYNRWLCQARSEDLSDIASLKALYQTGVDNCGRTVMVVVGRNIPVTLIDMDKALLYFIHVMDHIAVKEYVLVYFHTLTSDYNHLDSDFLKKLYDVVDIKYKRNLKAVYFVHPTFRSKVSTWFFTTFSVSGLKDKIHHVDSLQQLFSAISPEQIDFPPFVLEYDARENGPYFASYPPSPDL.

Residues 43–223 (RSPFVYSRDV…TYQKLLPLYF (181 aa)) form the Macro domain. Positions 248 to 275 (PVVPERQIRISEKPGASEDNEEEDEDEG) are disordered. The segment covering 253-263 (RQIRISEKPGA) has biased composition (basic and acidic residues). A compositionally biased stretch (acidic residues) spans 265–275 (EDNEEEDEDEG). S281 carries the post-translational modification Phosphoserine. The 149-residue stretch at 334 to 482 (DIASLKALYQ…FPPFVLEYDA (149 aa)) folds into the CRAL-TRIO domain.

Belongs to the GDAP2 family. Expressed at high levels in brain and testis, and at low levels in liver and kidney.

This is Ganglioside-induced differentiation-associated protein 2 (Gdap2) from Mus musculus (Mouse).